Here is a 321-residue protein sequence, read N- to C-terminus: Epoxyqueuosine reductase (321 aa).

D137 (proton donor) is an active-site residue. Positions 179 to 211 (EPLNADPPARSLCGRCSACIDACPTHAIREPFV) constitute a 4Fe-4S ferredoxin-type domain. Positions 191, 194, 197, 201, 217, 245, 248, and 252 each coordinate [4Fe-4S] cluster.

It belongs to the QueG family. Monomer. Cob(II)alamin serves as cofactor. [4Fe-4S] cluster is required as a cofactor.

It localises to the cytoplasm. The catalysed reaction is epoxyqueuosine(34) in tRNA + AH2 = queuosine(34) in tRNA + A + H2O. The protein operates within tRNA modification; tRNA-queuosine biosynthesis. Its function is as follows. Catalyzes the conversion of epoxyqueuosine (oQ) to queuosine (Q), which is a hypermodified base found in the wobble positions of tRNA(Asp), tRNA(Asn), tRNA(His) and tRNA(Tyr). This is Epoxyqueuosine reductase from Synechococcus sp. (strain CC9605).